We begin with the raw amino-acid sequence, 394 residues long: Phosphoglycerate kinase (394 aa).

Residues Asp-21 to Asn-23, Arg-36, His-59 to Arg-62, Arg-118, and Arg-151 contribute to the substrate site. Ser-183 carries the phosphoserine modification. Lys-201 provides a ligand contact to ATP. Phosphothreonine is present on Thr-299. ATP is bound by residues Glu-323 and Gly-350–Ser-353.

The protein belongs to the phosphoglycerate kinase family. Monomer.

It localises to the cytoplasm. The catalysed reaction is (2R)-3-phosphoglycerate + ATP = (2R)-3-phospho-glyceroyl phosphate + ADP. Its pathway is carbohydrate degradation; glycolysis; pyruvate from D-glyceraldehyde 3-phosphate: step 2/5. In Shouchella clausii (strain KSM-K16) (Alkalihalobacillus clausii), this protein is Phosphoglycerate kinase.